The primary structure comprises 994 residues: Phosphoenolpyruvate carboxylase (994 aa).

Residues 1-66 (MKSSGSARAT…QGRTREDKDR (66 aa)) form a disordered region. Low complexity-rich tracts occupy residues 14–25 (AVSSSSAPAHAE) and 41–54 (AAARPLAPTNAASA). Catalysis depends on residues H204 and K646.

It belongs to the PEPCase type 1 family. It depends on Mg(2+) as a cofactor.

It catalyses the reaction oxaloacetate + phosphate = phosphoenolpyruvate + hydrogencarbonate. Forms oxaloacetate, a four-carbon dicarboxylic acid source for the tricarboxylic acid cycle. The protein is Phosphoenolpyruvate carboxylase of Burkholderia mallei (strain NCTC 10247).